Consider the following 332-residue polypeptide: MTLRQTLEQQWQDGGALATALRPLGALTGKVARWRRRHIQGRAASIPTIVVGNLGVGGSGKTPLVAALARQLTVAGWRVAIVSRGYGARPPHWPYRVQRDDSPQQAGDEPLLLAQEQGQTQAVYLCPDRHRAIAAAAADGYNLALLDDGFQHLALQPSLRLLVLSGPRPLGNGHCLPAGPLRECPDAMLHADALLMDAAAAAAIPERNGPPRFLFRIQPKDLVAVNDPCRSRSLDSLQGQHVTAVTGIARPQRFVASLEGLGAIPDPRFFPDHHSFCASDIAHLPRPLVMTAKDAVKCREFAQADDWTLRIEAELEASSQPWLEQSLLPWRS.

Position 55–62 (55–62 (GVGGSGKT)) interacts with ATP.

Belongs to the LpxK family.

It catalyses the reaction a lipid A disaccharide + ATP = a lipid IVA + ADP + H(+). Its pathway is glycolipid biosynthesis; lipid IV(A) biosynthesis; lipid IV(A) from (3R)-3-hydroxytetradecanoyl-[acyl-carrier-protein] and UDP-N-acetyl-alpha-D-glucosamine: step 6/6. Its function is as follows. Transfers the gamma-phosphate of ATP to the 4'-position of a tetraacyldisaccharide 1-phosphate intermediate (termed DS-1-P) to form tetraacyldisaccharide 1,4'-bis-phosphate (lipid IVA). The protein is Tetraacyldisaccharide 4'-kinase of Acidithiobacillus ferrooxidans (strain ATCC 53993 / BNL-5-31) (Leptospirillum ferrooxidans (ATCC 53993)).